The primary structure comprises 311 residues: Endosome-associated-trafficking regulator 1 (311 aa).

The stretch at 167-278 (RGNAENGTKN…KSENERLRLG (112 aa)) forms a coiled coil.

Belongs to the ENTR1 family.

It is found in the cytoplasm. It localises to the early endosome. Its subcellular location is the endosome. The protein localises to the recycling endosome. The protein resides in the midbody. It is found in the cytoskeleton. It localises to the microtubule organizing center. Its subcellular location is the centrosome. The protein localises to the cilium basal body. Functionally, endosome-associated protein that plays a role in membrane receptor sorting, cytokinesis and ciliogenesis. This Danio rerio (Zebrafish) protein is Endosome-associated-trafficking regulator 1.